The chain runs to 771 residues: Caldesmon (771 aa).

Disordered stretches follow at residues 23–91 and 104–599; these read ERLS…ALLE and LQEA…FSPK. Positions 26 to 199 are myosin and calmodulin-binding; it reads SYQRNDDDEE…PKEVPTEENQ (174 aa). Phosphotyrosine is present on tyrosine 27. Basic and acidic residues-rich tracts occupy residues 47–67, 104–115, 139–155, 170–194, 203–215, 240–435, 442–484, 509–518, and 525–592; these read QERL…EKSE, LQEALERQKEFD, ITGK…RCEI, WRQD…KEVP, AVEK…EVVE, AADK…ESLP, SKKD…RELT, GSEKLKEKQQ, and DELK…EKKP. 10 repeat units span residues 251 to 265, 266 to 278, 279 to 291, 294 to 306, 309 to 321, 324 to 336, 337 to 349, 350 to 362, 363 to 375, and 378 to 390. Residues 251-390 are 10 X 13 AA approximate tandem repeats; that stretch reads EREKLEAEEK…KRAAEEKARL (140 aa). The tropomyosin-binding stretch occupies residues 523-580; sequence ELDELKKRREERRKILEEEEQKKKQEEAERKIREEEEKKRMKEEIERRRAEAAEKRQK. Serine 597 carries the post-translational modification Phosphoserine; by CDK1. The segment at 612–644 is strong actin-binding; the sequence is LNKSAQKSGMKPAHTTAVVSKIDSRLEQYTSAV. The interval 622 to 632 is tropomyosin-binding; it reads KPAHTTAVVSK. A Phosphotyrosine modification is found at tyrosine 640. The segment at 674 to 680 is calmodulin-binding; it reads WEKGNVF. Residues 676–771 form a disordered region; sequence KGNVFSSPGG…NGLRQFEKEP (96 aa). The span at 679 to 691 shows a compositional bias: polar residues; sequence VFSSPGGTGTPNK. Serine 682 is subject to Phosphoserine; by CDK1. Phosphothreonine; by CDK1 occurs at positions 688 and 711. A Phosphoserine; by CDK1 modification is found at serine 717. Basic and acidic residues predominate over residues 723–742; sequence SDLRPGDVSGKRNLWEKQSV. Residues 726 to 752 form a weak actin-binding region; that stretch reads RPGDVSGKRNLWEKQSVEKPAASSSKV.

The protein belongs to the caldesmon family. In terms of processing, phosphorylated in non-muscle cells. Phosphorylation by CDK1 during mitosis causes caldesmon to dissociate from microfilaments. Phosphorylation reduces caldesmon binding to actin, myosin, and calmodulin as well as its inhibition of actomyosin ATPase activity. Phosphorylation also occurs in both quiescent and dividing smooth muscle cells with similar effects on the interaction with actin and calmodulin and on microfilaments reorganization. As to expression, high-molecular-weight caldesmon (h-caldesmon) is predominantly expressed in smooth muscles, whereas low-molecular-weight caldesmon (l-caldesmon) is widely distributed in non-muscle tissues and cells. Not expressed in skeletal muscle or heart.

It localises to the cytoplasm. The protein resides in the cytoskeleton. The protein localises to the myofibril. It is found in the stress fiber. In terms of biological role, actin- and myosin-binding protein implicated in the regulation of actomyosin interactions in smooth muscle and nonmuscle cells (could act as a bridge between myosin and actin filaments). Stimulates actin binding of tropomyosin which increases the stabilization of actin filament structure. In muscle tissues, inhibits the actomyosin ATPase by binding to F-actin. This inhibition is attenuated by calcium-calmodulin and is potentiated by tropomyosin. Interacts with actin, myosin, two molecules of tropomyosin and with calmodulin. Also plays an essential role during cellular mitosis and receptor capping. The protein is Caldesmon (CALD1) of Gallus gallus (Chicken).